The chain runs to 240 residues: Lectin (240 aa).

The Mn(2+) site is built by E127 and D129. 4 residues coordinate Ca(2+): D129, Y131, N133, and D138. Mn(2+) is bound by residues D138 and H143.

It belongs to the leguminous lectin family. As to quaternary structure, heterotetramer of two alpha and two beta chains; disulfide bond linked.

Binds preferentially to oligosaccharides bearing the sequence Man-alpha-1-&gt;2 Man-alpha-1-&gt;6 Man-alpha-1-&gt;6Man found in early steps of glycoprotein processing in the endoplasmic reticulum. It binds weakly to highly processed oligosaccharide structures. The chain is Lectin from Leucomphalos mildbraedii (Bowringia mildbraedii).